A 76-amino-acid polypeptide reads, in one-letter code: DNA-directed RNA polymerase subunit epsilon (76 aa).

It belongs to the RNA polymerase subunit epsilon family. As to quaternary structure, RNAP is composed of a core of 2 alpha, a beta and a beta' subunit. The core is associated with a delta subunit, and at least one of epsilon or omega. When a sigma factor is associated with the core the holoenzyme is formed, which can initiate transcription.

It catalyses the reaction RNA(n) + a ribonucleoside 5'-triphosphate = RNA(n+1) + diphosphate. Its function is as follows. A non-essential component of RNA polymerase (RNAP). In Streptococcus sanguinis (strain SK36), this protein is DNA-directed RNA polymerase subunit epsilon.